A 557-amino-acid chain; its full sequence is Urease subunit alpha (557 aa).

The Urease domain maps to 130 to 557 (GFIDTHIHWV…LPLTQLYFIY (428 aa)). 3 residues coordinate Ni(2+): His-135, His-137, and Lys-217. An N6-carboxylysine modification is found at Lys-217. His-219 contacts substrate. Residues His-246 and His-272 each coordinate Ni(2+). His-320 (proton donor) is an active-site residue. Asp-360 is a binding site for Ni(2+).

Belongs to the metallo-dependent hydrolases superfamily. Urease alpha subunit family. Heterohexamer of 3 UreC (alpha) and 3 UreAB (gamma/beta) subunits. Requires Ni cation as cofactor. Post-translationally, carboxylation allows a single lysine to coordinate two nickel ions.

It is found in the cytoplasm. It catalyses the reaction urea + 2 H2O + H(+) = hydrogencarbonate + 2 NH4(+). It functions in the pathway nitrogen metabolism; urea degradation; CO(2) and NH(3) from urea (urease route): step 1/1. The protein is Urease subunit alpha of Sulfurisphaera tokodaii (strain DSM 16993 / JCM 10545 / NBRC 100140 / 7) (Sulfolobus tokodaii).